The primary structure comprises 169 residues: Putative pre-16S rRNA nuclease (169 aa).

A compositionally biased stretch (basic and acidic residues) spans 1-19; sequence MTDSDHRLPDRPGEGDPGR. The interval 1-22 is disordered; it reads MTDSDHRLPDRPGEGDPGRGRR.

The protein belongs to the YqgF nuclease family.

It localises to the cytoplasm. Its function is as follows. Could be a nuclease involved in processing of the 5'-end of pre-16S rRNA. The chain is Putative pre-16S rRNA nuclease from Mycobacterium sp. (strain JLS).